A 30-amino-acid polypeptide reads, in one-letter code: Propionyl-CoA carboxylase alpha chain (30 aa).

Residues 1-30 enclose the Biotin carboxylation domain; the sequence is PKIRKVLVANRGEIAIRVMRTXKELGIATV.

In terms of assembly, dodecamer composed of six biotin-containing alpha subunits and six beta subunits. The cofactor is Mg(2+). Requires Mn(2+) as cofactor. Biotin is required as a cofactor.

The enzyme catalyses propanoyl-CoA + hydrogencarbonate + ATP = (S)-methylmalonyl-CoA + ADP + phosphate + H(+). Its pathway is metabolic intermediate metabolism; propanoyl-CoA degradation; succinyl-CoA from propanoyl-CoA: step 1/3. Functionally, this is one of the 2 subunits of the biotin-dependent propionyl-CoA carboxylase (PCC), the enzyme catalyzing the carboxylation of propionyl-CoA/propanoyl-CoA to D-methylmalonyl-CoA/(S)-methylmalonyl-CoA. Within the holoenzyme, the alpha subunit catalyzes the ATP-dependent carboxylation of the biotin carried by the biotin carboxyl carrier (BCC) domain, while the beta subunit then transfers the carboxyl group from carboxylated biotin to propionyl-CoA. Propionyl-CoA carboxylase also carboxylates acetyl-CoA, butyryl-CoA and succinyl-CoA. This chain is Propionyl-CoA carboxylase alpha chain, found in Myxococcus xanthus.